Here is a 49-residue protein sequence, read N- to C-terminus: Large ribosomal subunit protein bL33A (49 aa).

Belongs to the bacterial ribosomal protein bL33 family.

In Bacillus pumilus (strain SAFR-032), this protein is Large ribosomal subunit protein bL33A.